The sequence spans 619 residues: MKLARKIKNRLFRSKKKTQKENTAVIVHPADNRVFSLFDKTKRIEENQQVPVRKISEFSWNGSILKIAGYMYIKGLPLQKEDQVRKRLLLVNNGVLFTAVSLRDIPVDQLSIDTSNVPGAYKWAGFSQQINFSKLMNDKPLPQGEYKLFLEIEAVDDQNVKHQEVHTVGNVSNFLSNDVYATKMEFHSAKKLMKFNLIVNYDEGEKTINLSCNKLQEIDPSLLELDTGKEANRFIRKLNTSLFHFAYDVFRLLPIKSNKIVFASDSRLDVTGNFEFVYEELLKREENFDFKFFLKSSIRDRKSLSELMSMAYHFATSKIIFIDDFYPIIYPLKIRKNADLVQLWHAVGAFKTFGYSRIGLPGGPSPHSKNHRNYTKVIVSSENIRKHYAEGFGVDIENVIATGVPRTDFFFDEAKKAFVKERLYTEYPFLKDKKVILFAPTFRGNGQQSAHYPFEVLDFDRLYRELKDEYIFLFKIHPFVRNDANIPYQYSDFFYDFSSFREINELLLVTDVLITDYSSVCFEYALLNKPMIFFSYDVDDYIRKRDFYYDYFDFIPGPLAKTSDQMISIIKEEKYNFEQIDSFVHYFFDDLDGKASERVVDQIVFPQEEEPVDDKVLKR.

The protein belongs to the CDP-glycerol glycerophosphotransferase family.

The protein resides in the cell membrane. The enzyme catalyses 4-O-[1-D-ribitylphospho-(2R)-1-glycerylphospho]-N-acetyl-beta-D-mannosaminyl-(1-&gt;4)-N-acetyl-alpha-D-glucosaminyl di-trans,octa-cis-undecaprenyl diphosphate + n CDP-L-ribitol = 4-O-[(D-ribitylphospho)(n)-D-ribitylphospho-(2R)-glycerylphospho]-N-acetyl-beta-D-mannosaminyl-(1-&gt;4)-N-acetyl-alpha-D-glucosaminyl di-trans,octa-cis-undecaprenyl diphosphate + n CMP + n H(+). Its pathway is cell wall biogenesis; poly(ribitol phosphate) teichoic acid biosynthesis. Functionally, responsible for the polymerization of the main chain of the major teichoic acid by sequential transfer of ribitol phosphate units from CDP-ribitol to the glycerol phosphate attached to the disaccharide linkage unit. Synthesizes polymers of up to 40 ribitol phosphate units in length. In Bacillus spizizenii (strain ATCC 23059 / NRRL B-14472 / W23) (Bacillus subtilis subsp. spizizenii), this protein is Teichoic acid poly(ribitol-phosphate) polymerase (tarL).